The sequence spans 193 residues: Xanthine phosphoribosyltransferase (193 aa).

Xanthine contacts are provided by leucine 20 and threonine 27. 128 to 132 (ANGQA) serves as a coordination point for 5-phospho-alpha-D-ribose 1-diphosphate. Lysine 156 is a xanthine binding site.

It belongs to the purine/pyrimidine phosphoribosyltransferase family. Xpt subfamily. Homodimer.

The protein resides in the cytoplasm. It carries out the reaction XMP + diphosphate = xanthine + 5-phospho-alpha-D-ribose 1-diphosphate. The protein operates within purine metabolism; XMP biosynthesis via salvage pathway; XMP from xanthine: step 1/1. In terms of biological role, converts the preformed base xanthine, a product of nucleic acid breakdown, to xanthosine 5'-monophosphate (XMP), so it can be reused for RNA or DNA synthesis. The polypeptide is Xanthine phosphoribosyltransferase (Streptococcus pneumoniae (strain CGSP14)).